The sequence spans 124 residues: Small ribosomal subunit protein bS6 (124 aa).

The disordered stretch occupies residues 99–124 (PLPAPRIVPGSEPEPVEQQEAAAVEA). Low complexity predominate over residues 114-124 (VEQQEAAAVEA).

The protein belongs to the bacterial ribosomal protein bS6 family.

Binds together with bS18 to 16S ribosomal RNA. In Prochlorococcus marinus (strain MIT 9303), this protein is Small ribosomal subunit protein bS6.